The chain runs to 312 residues: tRNA dimethylallyltransferase (312 aa).

10 to 17 (GPTGVGKT) contacts ATP. 12-17 (TGVGKT) contacts substrate.

It belongs to the IPP transferase family. As to quaternary structure, monomer. Mg(2+) is required as a cofactor.

It catalyses the reaction adenosine(37) in tRNA + dimethylallyl diphosphate = N(6)-dimethylallyladenosine(37) in tRNA + diphosphate. Its function is as follows. Catalyzes the transfer of a dimethylallyl group onto the adenine at position 37 in tRNAs that read codons beginning with uridine, leading to the formation of N6-(dimethylallyl)adenosine (i(6)A). The sequence is that of tRNA dimethylallyltransferase from Coprothermobacter proteolyticus (strain ATCC 35245 / DSM 5265 / OCM 4 / BT).